The primary structure comprises 178 residues: Large ribosomal subunit protein uL6 (178 aa).

Belongs to the universal ribosomal protein uL6 family. In terms of assembly, part of the 50S ribosomal subunit.

Its function is as follows. This protein binds to the 23S rRNA, and is important in its secondary structure. It is located near the subunit interface in the base of the L7/L12 stalk, and near the tRNA binding site of the peptidyltransferase center. The protein is Large ribosomal subunit protein uL6 of Coxiella burnetii (strain CbuG_Q212) (Coxiella burnetii (strain Q212)).